The sequence spans 606 residues: Elongation factor 4 (606 aa).

Positions 7–189 constitute a tr-type G domain; sequence SRIRNFCIIA…AVVDRVPPPK (183 aa). GTP is bound by residues 19-24 and 136-139; these read DHGKST and NKID.

Belongs to the TRAFAC class translation factor GTPase superfamily. Classic translation factor GTPase family. LepA subfamily.

The protein resides in the cell inner membrane. It carries out the reaction GTP + H2O = GDP + phosphate + H(+). Required for accurate and efficient protein synthesis under certain stress conditions. May act as a fidelity factor of the translation reaction, by catalyzing a one-codon backward translocation of tRNAs on improperly translocated ribosomes. Back-translocation proceeds from a post-translocation (POST) complex to a pre-translocation (PRE) complex, thus giving elongation factor G a second chance to translocate the tRNAs correctly. Binds to ribosomes in a GTP-dependent manner. The sequence is that of Elongation factor 4 from Parasynechococcus marenigrum (strain WH8102).